Consider the following 364-residue polypeptide: F-box/kelch-repeat protein At3g23880 (364 aa).

An F-box domain is found at 8-54 (MFSPHNLPLEMMEEILLRLPVKSLTRFKCVCSSWRSLISETLFALKH). 2 Kelch repeats span residues 169 to 215 (DYKV…SRSG) and 216 to 265 (IYIN…TLGD).

The chain is F-box/kelch-repeat protein At3g23880 from Arabidopsis thaliana (Mouse-ear cress).